Here is a 321-residue protein sequence, read N- to C-terminus: G-protein coupled receptor homolog ECRF3 (321 aa).

At M1 to N34 the chain is on the extracellular side. N14 and N18 each carry an N-linked (GlcNAc...) asparagine; by host glycan. Residues F35 to L51 form a helical membrane-spanning segment. Over C52–Y76 the chain is Cytoplasmic. The chain crosses the membrane as a helical span at residues L77–L93. Topologically, residues M94–P124 are extracellular. N-linked (GlcNAc...) asparagine; by host glycosylation occurs at N117. Residues F125–A141 form a helical membrane-spanning segment. Over T142 to T149 the chain is Cytoplasmic. Residues L150–G166 form a helical membrane-spanning segment. Topologically, residues A167–K196 are extracellular. Residues L197–I215 form a helical membrane-spanning segment. The Cytoplasmic segment spans residues C216–E234. A helical membrane pass occupies residues V235 to I251. At P252–Y286 the chain is on the extracellular side. Residues M287–F303 form a helical membrane-spanning segment. Over G304–C321 the chain is Cytoplasmic.

The protein belongs to the G-protein coupled receptor 1 family.

The protein resides in the host cell membrane. Its function is as follows. May be highly relevant to the process of cellular transformation and rapid T-cell proliferation effected by HVS during latent infections of T-cells in susceptible hosts. The chain is G-protein coupled receptor homolog ECRF3 (74) from Saimiri sciureus (Common squirrel monkey).